A 245-amino-acid polypeptide reads, in one-letter code: Phycocyanobilin:ferredoxin oxidoreductase (245 aa).

It belongs to the HY2 family.

The enzyme catalyses (2R,3Z)-phycocyanobilin + 4 oxidized [2Fe-2S]-[ferredoxin] = biliverdin IXalpha + 4 reduced [2Fe-2S]-[ferredoxin] + 4 H(+). In terms of biological role, catalyzes the four-electron reduction of biliverdin IX-alpha (2-electron reduction at both the A and D rings); the reaction proceeds via an isolatable 2-electron intermediate, 181,182-dihydrobiliverdin. Upon overexpression in E.coli with PCB:ferredoxin oxidoreductase, CpeS and either CpcB or PecB permits synthesis of phycocyanin-coupled CpcB or PecB. The protein is Phycocyanobilin:ferredoxin oxidoreductase (pcyA) of Nostoc sp. (strain PCC 7120 / SAG 25.82 / UTEX 2576).